Consider the following 788-residue polypeptide: ATP-dependent 6-phosphofructokinase, platelet type (788 aa).

Met-1 carries the N-acetylmethionine modification. The interval 1–399 (MSDQDSSTSS…NLNTYKRLAI (399 aa)) is N-terminal catalytic PFK domain 1. Phosphoserine is present on residues Ser-2, Ser-6, Ser-12, and Ser-21. ATP is bound by residues Gly-34, 97 to 98 (RC), and 127 to 130 (GDGS). Asp-128 lines the Mg(2+) pocket. Ser-142 bears the Phosphoserine mark. Substrate-binding positions include 173–175 (SID), Arg-210, 217–219 (MGR), Glu-273, Arg-301, and 307–310 (HVQR). Residue Asp-175 is the Proton acceptor of the active site. Phosphoserine is present on Ser-386. Lys-395 carries the N6-acetyllysine modification. Positions 400–411 (KEPDDKIPKSNC) are interdomain linker. The tract at residues 412–788 (NVAIINVGAP…VHNHGELSAI (377 aa)) is C-terminal regulatory PFK domain 2. Arg-481 serves as a coordination point for beta-D-fructose 2,6-bisphosphate. Lys-486 bears the N6-acetyllysine mark. Residues 538-542 (TVSNN), Arg-576, 583-585 (MGG), and Glu-639 each bind beta-D-fructose 2,6-bisphosphate. Ser-540 is a glycosylation site (O-linked (GlcNAc) serine). The residue at position 651 (Tyr-651) is a Phosphotyrosine. Beta-D-fructose 2,6-bisphosphate is bound by residues Arg-665 and 671-674 (HMQQ). The residue at position 688 (Lys-688) is an N6-acetyllysine. Arg-744 is a binding site for beta-D-fructose 2,6-bisphosphate.

It belongs to the phosphofructokinase type A (PFKA) family. ATP-dependent PFK group I subfamily. Eukaryotic two domain clade 'E' sub-subfamily. Homo- and heterotetramers. Phosphofructokinase (PFK) enzyme functions as a tetramer composed of different combinations of 3 types of subunits, called PFKM (M), PFKL (L) and PFKP (P). The composition of the PFK tetramer differs according to the tissue type it is present in. The kinetic and regulatory properties of the tetrameric enzyme are dependent on the subunit composition, hence can vary across tissues. Interacts with ATG4B; promoting phosphorylation of ATG4B. It depends on Mg(2+) as a cofactor. In terms of processing, glcNAcylation decreases enzyme activity. Phosphorylation at Ser-386 promotes interaction with ATG4B. As to expression, expressed at high level in neuroendocrine tissues.

It is found in the cytoplasm. It catalyses the reaction beta-D-fructose 6-phosphate + ATP = beta-D-fructose 1,6-bisphosphate + ADP + H(+). It participates in carbohydrate degradation; glycolysis; D-glyceraldehyde 3-phosphate and glycerone phosphate from D-glucose: step 3/4. With respect to regulation, allosterically activated by ADP, AMP, or fructose 2,6-bisphosphate, and allosterically inhibited by ATP or citrate. Its function is as follows. Catalyzes the phosphorylation of D-fructose 6-phosphate to fructose 1,6-bisphosphate by ATP, the first committing step of glycolysis. This is ATP-dependent 6-phosphofructokinase, platelet type (Pfkp) from Rattus norvegicus (Rat).